The chain runs to 317 residues: Type II methyltransferase M.MgeORF184P (317 aa).

Belongs to the N(4)/N(6)-methyltransferase family.

It carries out the reaction a 2'-deoxyadenosine in DNA + S-adenosyl-L-methionine = an N(6)-methyl-2'-deoxyadenosine in DNA + S-adenosyl-L-homocysteine + H(+). In terms of biological role, probably recognizes the double-stranded sequence 5'-CTAT-3' and methylates A-3 on only one strand; as the bacterial DNA is methylated on this sequence and this is the only type II methylase in the genome, it is probably responsible for all of the methylation on this site in the genome. The chain is Type II methyltransferase M.MgeORF184P from Mycoplasma genitalium (strain ATCC 33530 / DSM 19775 / NCTC 10195 / G37) (Mycoplasmoides genitalium).